The following is a 57-amino-acid chain: UPF0509 protein YciZ (57 aa).

It belongs to the UPF0509 family.

This Shigella flexneri protein is UPF0509 protein YciZ (yciZ).